The following is a 492-amino-acid chain: Glycylpeptide N-tetradecanoyltransferase (492 aa).

A compositionally biased stretch (basic and acidic residues) spans 1 to 22 (MSDSKDRKGKAPEGQSSEKKDG). Residues 1–45 (MSDSKDRKGKAPEGQSSEKKDGAVNITPQMAESLLENNPALRNET) form a disordered region. Residues 82–85 (YKFW), 215–217 (LCI), and 223–227 (SKRLT) contribute to the tetradecanoyl-CoA site. L492 serves as the catalytic Proton acceptor; via carboxylate.

It belongs to the NMT family. As to quaternary structure, monomer.

The protein localises to the cytoplasm. The enzyme catalyses N-terminal glycyl-[protein] + tetradecanoyl-CoA = N-tetradecanoylglycyl-[protein] + CoA + H(+). In terms of biological role, adds a myristoyl group to the N-terminal glycine residue of certain cellular proteins. The sequence is that of Glycylpeptide N-tetradecanoyltransferase (nmt1) from Aspergillus fumigatus (strain ATCC MYA-4609 / CBS 101355 / FGSC A1100 / Af293) (Neosartorya fumigata).